We begin with the raw amino-acid sequence, 172 residues long: Putative phosphoesterase Bcer98_0945 (172 aa).

Residue histidine 34 is the Proton donor of the active site. Short sequence motifs (HXTX) lie at residues 34 to 37 and 115 to 118; these read HITL and HLTI. Histidine 115 acts as the Proton acceptor in catalysis.

This sequence belongs to the 2H phosphoesterase superfamily. YjcG family.

The chain is Putative phosphoesterase Bcer98_0945 from Bacillus cytotoxicus (strain DSM 22905 / CIP 110041 / 391-98 / NVH 391-98).